A 372-amino-acid polypeptide reads, in one-letter code: Putative glutamate--cysteine ligase 2 (372 aa).

The protein belongs to the glutamate--cysteine ligase type 2 family. YbdK subfamily. As to quaternary structure, homodimer.

It catalyses the reaction L-cysteine + L-glutamate + ATP = gamma-L-glutamyl-L-cysteine + ADP + phosphate + H(+). In terms of biological role, ATP-dependent carboxylate-amine ligase which exhibits weak glutamate--cysteine ligase activity. The sequence is that of Putative glutamate--cysteine ligase 2 (ybdK) from Escherichia coli O81 (strain ED1a).